The chain runs to 275 residues: Adenylate kinase 2 (275 aa).

Residue Gly-2 is the site of N-myristoyl glycine attachment. Residues 21-30 form a required for cell membrane translocation but dispensable for cell membrane localization region; it reads KKKEKKKKKK. 39 to 44 contacts ATP; sequence GSGKDT. The interval 59–97 is NMP; the sequence is CISKLLKEYKEEYNKENVLNEEENYFDEIEKCMIDGSLV. Residues 95–97, 126–129, and Gln-133 each bind AMP; these read SLV and GFPR. ATP is bound at residue Arg-164. The LID stretch occupies residues 165-214; the sequence is IIDPITNISYNENIIQIIKKKREGQELSDKEQKQLIIDNHLYNNLSNDIL. The AMP site is built by Arg-220 and Arg-231.

The protein belongs to the adenylate kinase family. As to quaternary structure, monomer. Oligomer. Heterodimer composed of NMT and AK2; AK2 myristoylation stabilizes the complex. In terms of processing, myristoylation is required for cell membrane localization. Post-translationally, may be palmitoylated at Cys-4 which stabilizes cell membrane localization of the myristoylated protein.

The protein resides in the parasitophorous vacuole membrane. The enzyme catalyses AMP + ATP = 2 ADP. In terms of biological role, catalyzes the reversible transfer of the terminal phosphate group between ATP and AMP. Has very low activity with CTP, GTP, ITP and UTP and no activity with GMP, UMP or IMP in vitro. This is Adenylate kinase 2 from Plasmodium falciparum (isolate 3D7).